We begin with the raw amino-acid sequence, 239 residues long: tRNA (guanine-N(7)-)-methyltransferase (239 aa).

S-adenosyl-L-methionine-binding residues include glutamate 69, glutamate 94, aspartate 121, and aspartate 144. Residue aspartate 144 is part of the active site. A substrate-binding site is contributed by lysine 148. The tract at residues 150–155 (RHNKRR) is interaction with RNA. Residues aspartate 180 and 217 to 220 (TKFE) contribute to the substrate site.

This sequence belongs to the class I-like SAM-binding methyltransferase superfamily. TrmB family. As to quaternary structure, monomer.

The enzyme catalyses guanosine(46) in tRNA + S-adenosyl-L-methionine = N(7)-methylguanosine(46) in tRNA + S-adenosyl-L-homocysteine. It functions in the pathway tRNA modification; N(7)-methylguanine-tRNA biosynthesis. In terms of biological role, catalyzes the formation of N(7)-methylguanine at position 46 (m7G46) in tRNA. In Sodalis glossinidius (strain morsitans), this protein is tRNA (guanine-N(7)-)-methyltransferase.